Here is an 81-residue protein sequence, read N- to C-terminus: Costars family protein ABRACL (81 aa).

Met1 bears the N-acetylmethionine mark.

This sequence belongs to the costars family.

In Homo sapiens (Human), this protein is Costars family protein ABRACL (ABRACL).